The sequence spans 962 residues: Oncostatin-M-specific receptor subunit beta (962 aa).

Residues 1-28 (MAFSVVLHQVTFLLAVLSLRTSQSKVLG) form the signal peptide. Residues 29 to 738 (EPLQLTPEIH…VTTPDVRSHM (710 aa)) are Extracellular-facing. An N-linked (GlcNAc...) asparagine glycan is attached at asparagine 219. 5 Fibronectin type-III domains span residues 237–332 (EPKN…VHPK), 333–426 (APHD…TPEA), 428–527 (PSEA…SGHE), 528–621 (EVHE…TQEL), and 623–734 (PSVN…TPDV). Cysteine 243 and cysteine 253 are oxidised to a cystine. An N-linked (GlcNAc...) asparagine glycan is attached at asparagine 324. A WSXWS motif motif is present at residues 413–417 (WSDWM). N-linked (GlcNAc...) asparagine glycosylation is found at asparagine 492, asparagine 578, and asparagine 723. The chain crosses the membrane as a helical span at residues 739 to 759 (LLQIILPMTLGVFLSIIVCYW). Topologically, residues 760–962 (KSQWVKEKCY…ASLKENNLTS (203 aa)) are cytoplasmic. The Box 1 motif motif lies at 768–776 (CYPDIPNPY). The interval 818 to 840 (VGSGKLHTEDVPTKPPLVPTEKD) is disordered.

This sequence belongs to the type I cytokine receptor family. Type 2 subfamily. Heterodimer composed of OSMR and IL6ST (type II OSM receptor). Heterodimer with IL31RA to form the IL31 receptor. Widely expressed. Expressed at high levels in the liver, skin and spleen. In the liver it is expressed exclusively in the oval cells.

It is found in the membrane. Functionally, associates with IL31RA to form the IL31 receptor. Binds IL31 and activates STAT1, STAT3 and STAT5. Capable of transducing OSM-specific signaling events. The OSM/OSM-R system is pivotal in the differentiation of oval cells into hepatocytes, thereby promoting liver regeneration. The sequence is that of Oncostatin-M-specific receptor subunit beta (Osmr) from Rattus norvegicus (Rat).